A 324-amino-acid polypeptide reads, in one-letter code: 6-methylsalicylic acid decarboxylase (324 aa).

Zn(2+)-binding residues include His7, His9, His157, and Asp274.

Belongs to the metallo-dependent hydrolases superfamily. ACMSD family. In terms of assembly, monomer.

The protein localises to the cytoplasm. The protein resides in the cytosol. The enzyme catalyses 6-methylsalicylate + H(+) = 3-methylphenol + CO2. It functions in the pathway mycotoxin biosynthesis; patulin biosynthesis. 6-methylsalicylic acid decarboxylase; part of the gene cluster that mediates the biosynthesis of patulin, an acetate-derived tetraketide mycotoxin produced by several fungal species that shows antimicrobial properties against several bacteria. PatG catalyzes the decarboxylation of 6-methylsalicylic acid to yield m-cresol. The pathway begins with the synthesis of 6-methylsalicylic acid by the polyketide synthase (PKS) patK via condensation of acetate and malonate units. The 6-methylsalicylic acid decarboxylase patG then catalyzes the decarboxylation of 6-methylsalicylic acid to yield m-cresol (also known as 3-methylphenol). These first reactions occur in the cytosol. The intermediate m-cresol is then transported into the endoplasmic reticulum where the cytochrome P450 monooxygenase patH converts it to m-hydroxybenzyl alcohol, which is further converted to gentisyl alcohol by the cytochrome P450 monooxygenase patI. The oxidoreductases patJ and patO further convert gentisyl alcohol to isoepoxydon in the vacuole. PatN catalyzes then the transformation of isoepoxydon into phyllostine. The cluster protein patF is responsible for the conversion from phyllostine to neopatulin whereas the alcohol dehydrogenase patD converts neopatulin to E-ascladiol. The steps between isoepoxydon and E-ascladiol occur in the cytosol, and E-ascladiol is probably secreted to the extracellular space by one of the cluster-specific transporters patC or patM. Finally, the secreted patulin synthase patE catalyzes the conversion of E-ascladiol to patulin. The sequence is that of 6-methylsalicylic acid decarboxylase from Penicillium expansum (Blue mold rot fungus).